The chain runs to 525 residues: 2,3-bisphosphoglycerate-independent phosphoglycerate mutase 2 (525 aa).

Mn(2+) is bound by residues aspartate 14 and serine 64. The active-site Phosphoserine intermediate is serine 64. Substrate contacts are provided by residues histidine 125, 155–156 (RD), arginine 187, arginine 193, 274–277 (RADR), and lysine 347. Mn(2+)-binding residues include aspartate 414, histidine 418, aspartate 455, histidine 456, and histidine 474.

The protein belongs to the BPG-independent phosphoglycerate mutase family. It depends on Mn(2+) as a cofactor.

It carries out the reaction (2R)-2-phosphoglycerate = (2R)-3-phosphoglycerate. Its pathway is carbohydrate degradation; glycolysis; pyruvate from D-glyceraldehyde 3-phosphate: step 3/5. In terms of biological role, catalyzes the interconversion of 2-phosphoglycerate and 3-phosphoglycerate. The protein is 2,3-bisphosphoglycerate-independent phosphoglycerate mutase 2 of Methanosarcina barkeri (strain Fusaro / DSM 804).